The primary structure comprises 216 residues: LexA repressor 1 (216 aa).

Residues 38–58 (TRQIGAAVGLRSMSSVARHLR) constitute a DNA-binding region (H-T-H motif). Residues Ser-140 and Lys-177 each act as for autocatalytic cleavage activity in the active site.

Belongs to the peptidase S24 family. As to quaternary structure, homodimer.

It carries out the reaction Hydrolysis of Ala-|-Gly bond in repressor LexA.. Its function is as follows. Represses a number of genes involved in the response to DNA damage (SOS response), including recA and lexA. In the presence of single-stranded DNA, RecA interacts with LexA causing an autocatalytic cleavage which disrupts the DNA-binding part of LexA, leading to derepression of the SOS regulon and eventually DNA repair. This chain is LexA repressor 1, found in Nocardia farcinica (strain IFM 10152).